The following is a 111-amino-acid chain: uncharacterized protein (111 aa).

The protein resides in the cytoplasm. Its subcellular location is the nucleus. This is an uncharacterized protein from Saccharomyces cerevisiae (strain ATCC 204508 / S288c) (Baker's yeast).